Reading from the N-terminus, the 167-residue chain is 6,7-dimethyl-8-ribityllumazine synthase (167 aa).

Residues F23, 57-59 (TYE), and 81-83 (AVI) contribute to the 5-amino-6-(D-ribitylamino)uracil site. Position 86-87 (86-87 (GT)) interacts with (2S)-2-hydroxy-3-oxobutyl phosphate. H89 acts as the Proton donor in catalysis. F119 lines the 5-amino-6-(D-ribitylamino)uracil pocket. Residue R133 participates in (2S)-2-hydroxy-3-oxobutyl phosphate binding.

It belongs to the DMRL synthase family.

It carries out the reaction (2S)-2-hydroxy-3-oxobutyl phosphate + 5-amino-6-(D-ribitylamino)uracil = 6,7-dimethyl-8-(1-D-ribityl)lumazine + phosphate + 2 H2O + H(+). Its pathway is cofactor biosynthesis; riboflavin biosynthesis; riboflavin from 2-hydroxy-3-oxobutyl phosphate and 5-amino-6-(D-ribitylamino)uracil: step 1/2. Functionally, catalyzes the formation of 6,7-dimethyl-8-ribityllumazine by condensation of 5-amino-6-(D-ribitylamino)uracil with 3,4-dihydroxy-2-butanone 4-phosphate. This is the penultimate step in the biosynthesis of riboflavin. The protein is 6,7-dimethyl-8-ribityllumazine synthase of Myxococcus xanthus (strain DK1622).